We begin with the raw amino-acid sequence, 495 residues long: MSLWINGDWVTGEGERRVKTNPVGNEALWQGFDASPAQVEQACQAARKAFPAWAKLPFTARQAIVEKFATLLEANKAELTRVIARETGKPRWEATTEITAMINKITISVKAYHTRTGEQHTAMADGAATLRHRPHGVLAVFGPYNFPGHLPNGHIVPALLAGNTVIFKPSELTPWSGEAVVKLWEQAGLPPGVLNLVQGGRETGQALSALSDLDGLLFTGSAGTGYQLHRQLAGQPEKILALEMGGNNPLIVEDPEDIDAAVHLAIQSAFVTAGQRCTCARRLLVKNGAQGDAFLARLIEVTARLVPDAWDAEPQPFIGGLISEQAANNVIHAWREHVARGAKTLLEPKLVQPGTSLLTPGIIDMSDARDIPDEEVFGPLLCVWRYDDFDSAIAMANNTRYGLSSGLISPDREKFDQLLIEARAGIVNWNKPLTGAASTAPFGGVGASGNHRASAWYAADYCAWPMASLETPALTLPEALNPGLDFTQGNGHESA.

220 to 225 (GSAGTG) contributes to the NAD(+) binding site. Active-site residues include glutamate 243 and cysteine 277.

Belongs to the aldehyde dehydrogenase family. AstD subfamily.

The catalysed reaction is N-succinyl-L-glutamate 5-semialdehyde + NAD(+) + H2O = N-succinyl-L-glutamate + NADH + 2 H(+). It participates in amino-acid degradation; L-arginine degradation via AST pathway; L-glutamate and succinate from L-arginine: step 4/5. In terms of biological role, catalyzes the NAD-dependent reduction of succinylglutamate semialdehyde into succinylglutamate. This is N-succinylglutamate 5-semialdehyde dehydrogenase from Enterobacter sp. (strain 638).